A 678-amino-acid polypeptide reads, in one-letter code: PTS system glucose-specific EIICBA component (678 aa).

Residues 3–414 enclose the PTS EIIC type-1 domain; it reads KKLFGQLQRI…FKYKTPGRED (412 aa). 11 helical membrane passes run 16–36, 63–83, 89–109, 126–146, 170–190, 211–231, 273–293, 303–323, 329–349, 355–375, and 382–402; these read LMLPVAILPAAGLLLAIGTAM, AGGIIFDNLPMIFAMGVAIGL, VAAIAAFVGYLVMNKTMGAFL, VLGIPTLQTGVFGGIIIGALA, FVPIMMATTSFILAFPMAWIW, LAVFLFGFIKRLLIPFGLHHI, FMQGEFPVMMFGLPAAALAIY, VVAGLMGSAALTSFLTGITEP, LFVAPVLFFVHAILDGLSFLI, VHLGYTFSGGFIDYVLLGVLP, and LVIPVGVVYAFIYYFVFRFLI. The PTS EIIB type-1 domain occupies 425–506; the sequence is SELPFNVLKA…SLIMKGEITK (82 aa). C447 functions as the Phosphocysteine intermediate; for EIIB activity in the catalytic mechanism. The region spanning 547-651 is the PTS EIIA type-1 domain; sequence DQVFAQKMMG…STVTPLIITN (105 aa). The active-site Tele-phosphohistidine intermediate; for EIIA activity is the H599.

It localises to the cell membrane. It carries out the reaction N(pros)-phospho-L-histidyl-[protein] + D-glucose(out) = D-glucose 6-phosphate(in) + L-histidyl-[protein]. The phosphoenolpyruvate-dependent sugar phosphotransferase system (sugar PTS), a major carbohydrate active transport system, catalyzes the phosphorylation of incoming sugar substrates concomitantly with their translocation across the cell membrane. This system is involved in glucose transport. The chain is PTS system glucose-specific EIICBA component (ptsG) from Staphylococcus saprophyticus subsp. saprophyticus (strain ATCC 15305 / DSM 20229 / NCIMB 8711 / NCTC 7292 / S-41).